The chain runs to 70 residues: MTALAAGIAMLAGLGVGIGIGIATGKASESIGRQPEAFGRIFPLFLIGAALAEAVAIYSLVIAFMLISKI.

Helical transmembrane passes span 3–23 (ALAA…IGIA) and 44–64 (LFLI…VIAF).

This sequence belongs to the ATPase C chain family. As to quaternary structure, F-type ATPases have 2 components, F(1) - the catalytic core - and F(0) - the membrane proton channel. F(1) has five subunits: alpha(3), beta(3), gamma(1), delta(1), epsilon(1). F(0) has three main subunits: a(1), b(2) and c(10-14). The alpha and beta chains form an alternating ring which encloses part of the gamma chain. F(1) is attached to F(0) by a central stalk formed by the gamma and epsilon chains, while a peripheral stalk is formed by the delta and b chains.

The protein localises to the cell membrane. In terms of biological role, f(1)F(0) ATP synthase produces ATP from ADP in the presence of a proton or sodium gradient. F-type ATPases consist of two structural domains, F(1) containing the extramembraneous catalytic core and F(0) containing the membrane proton channel, linked together by a central stalk and a peripheral stalk. During catalysis, ATP synthesis in the catalytic domain of F(1) is coupled via a rotary mechanism of the central stalk subunits to proton translocation. Key component of the F(0) channel; it plays a direct role in translocation across the membrane. A homomeric c-ring of between 10-14 subunits forms the central stalk rotor element with the F(1) delta and epsilon subunits. The polypeptide is ATP synthase subunit c (Caldicellulosiruptor bescii (strain ATCC BAA-1888 / DSM 6725 / KCTC 15123 / Z-1320) (Anaerocellum thermophilum)).